Consider the following 456-residue polypeptide: MEALGDLEGPRAPGGDDPAGSAGETPGWLSREQVFVLISAASVNLGSMMCYSILGPFFPKEAEKKGASNTIIGMIFGCFALFELLASLVFGNYLVHIGAKFMFVAGMFVSGGVTILFGVLDRVPDGPVFIAMCFLVRVMDAVSFAAAMTASSSILAKAFPNNVATVLGSLETFSGLGLILGPPVGGFLYQSFGYEVPFIVLGCVVLLMVPLNMYILPNYESDPGEHSFWKLIALPKVGLIAFVINSLSSCFGFLDPTLSLFVLEKFNLPAGYVGLVFLGMALSYAISSPLFGLLSDKRPPLRKWLLVFGNLITAGCYMLLGPVPILHIKSQLWLLVLILVVSGLSAGMSIIPTFPEILSCAHENGFEEGLSTLGLVSGLFSAMWSIGAFMGPTLGGFLYEKIGFEWAAAIQGLWALISGLAMGLFYLLEYSRRKRSKSQNILSTEEERTTLLPNET.

Met1 bears the N-acetylmethionine mark. The disordered stretch occupies residues 1-24 (MEALGDLEGPRAPGGDDPAGSAGE). Over 1-33 (MEALGDLEGPRAPGGDDPAGSAGETPGWLSREQ) the chain is Cytoplasmic. Over residues 10-23 (PRAPGGDDPAGSAG) the composition is skewed to low complexity. Ser21 is modified (phosphoserine). The chain crosses the membrane as a helical span at residues 34–54 (VFVLISAASVNLGSMMCYSIL). Residues 55–70 (GPFFPKEAEKKGASNT) are Extracellular-facing. The helical transmembrane segment at 71 to 91 (IIGMIFGCFALFELLASLVFG) threads the bilayer. At 92–100 (NYLVHIGAK) the chain is on the cytoplasmic side. Residues 101–121 (FMFVAGMFVSGGVTILFGVLD) form a helical membrane-spanning segment. The Extracellular segment spans residues 122-127 (RVPDGP). A helical membrane pass occupies residues 128–148 (VFIAMCFLVRVMDAVSFAAAM). Over 149–161 (TASSSILAKAFPN) the chain is Cytoplasmic. The chain crosses the membrane as a helical span at residues 162–184 (NVATVLGSLETFSGLGLILGPPV). The Extracellular portion of the chain corresponds to 185-195 (GGFLYQSFGYE). The chain crosses the membrane as a helical span at residues 196–216 (VPFIVLGCVVLLMVPLNMYIL). Topologically, residues 217-230 (PNYESDPGEHSFWK) are cytoplasmic. The helical transmembrane segment at 231–251 (LIALPKVGLIAFVINSLSSCF) threads the bilayer. Topologically, residues 252–272 (GFLDPTLSLFVLEKFNLPAGY) are extracellular. The helical transmembrane segment at 273–293 (VGLVFLGMALSYAISSPLFGL) threads the bilayer. Residues 294–304 (LSDKRPPLRKW) are Cytoplasmic-facing. A helical transmembrane segment spans residues 305 to 325 (LLVFGNLITAGCYMLLGPVPI). Topologically, residues 326–331 (LHIKSQ) are extracellular. A helical transmembrane segment spans residues 332–352 (LWLLVLILVVSGLSAGMSIIP). Residues 353-377 (TFPEILSCAHENGFEEGLSTLGLVS) are Cytoplasmic-facing. Residues 378-398 (GLFSAMWSIGAFMGPTLGGFL) form a helical membrane-spanning segment. The Extracellular segment spans residues 399 to 407 (YEKIGFEWA). The helical transmembrane segment at 408 to 428 (AAIQGLWALISGLAMGLFYLL) threads the bilayer. The Cytoplasmic portion of the chain corresponds to 429–456 (EYSRRKRSKSQNILSTEEERTTLLPNET). Ser438 carries the phosphoserine modification.

The protein belongs to the major facilitator superfamily. Expressed in various tissues including lung, placenta, adrenal gland, liver, testis, and brain.

Its subcellular location is the cytoplasmic vesicle. It is found in the secretory vesicle membrane. The protein resides in the secretory vesicle. It localises to the synaptic vesicle membrane. The enzyme catalyses spermine(in) + n H(+)(out) = spermine(out) + n H(+)(in). It carries out the reaction spermidine(in) + n H(+)(out) = spermidine(out) + n H(+)(in). The catalysed reaction is serotonin(in) + n H(+)(out) = serotonin(out) + n H(+)(in). Functionally, proton-coupled polyamine antiporter involved in the translocation of polyamines from cytosol into secretory vesicles prior to their release via exocytosis. Uses the electrochemical proton gradient generated by a V-type proton-pumping ATPase to couple the efflux of protons with the uptake of a polyamine molecule. Facilitates vesicular storage of spermine and spermidine in astrocytes with an impact on glutamatergic neuronal transmission and memory formation. Upon antigen stimulation, regulates polyamine accumulation and release in mast cell secretory granules, which in turn potentiates mast cell degranulation and histamine secretion. The sequence is that of MFS-type transporter SLC18B1 from Homo sapiens (Human).